A 427-amino-acid polypeptide reads, in one-letter code: Ribosomal protein uS12 methylthiotransferase RimO (427 aa).

The 116-residue stretch at methionine 1–isoleucine 116 folds into the MTTase N-terminal domain. [4Fe-4S] cluster is bound by residues cysteine 10, cysteine 46, cysteine 79, cysteine 145, cysteine 149, and cysteine 152. The Radical SAM core domain maps to valine 131–glutamate 360. Positions glutamate 363–glutamate 426 constitute a TRAM domain.

This sequence belongs to the methylthiotransferase family. RimO subfamily. [4Fe-4S] cluster serves as cofactor.

Its subcellular location is the cytoplasm. The catalysed reaction is L-aspartate(89)-[ribosomal protein uS12]-hydrogen + (sulfur carrier)-SH + AH2 + 2 S-adenosyl-L-methionine = 3-methylsulfanyl-L-aspartate(89)-[ribosomal protein uS12]-hydrogen + (sulfur carrier)-H + 5'-deoxyadenosine + L-methionine + A + S-adenosyl-L-homocysteine + 2 H(+). Functionally, catalyzes the methylthiolation of an aspartic acid residue of ribosomal protein uS12. This chain is Ribosomal protein uS12 methylthiotransferase RimO, found in Thermosipho africanus (strain TCF52B).